Reading from the N-terminus, the 301-residue chain is ATP synthase gamma chain (301 aa).

It belongs to the ATPase gamma chain family. As to quaternary structure, F-type ATPases have 2 components, CF(1) - the catalytic core - and CF(0) - the membrane proton channel. CF(1) has five subunits: alpha(3), beta(3), gamma(1), delta(1), epsilon(1). CF(0) has three main subunits: a, b and c.

The protein localises to the cell inner membrane. Its function is as follows. Produces ATP from ADP in the presence of a proton gradient across the membrane. The gamma chain is believed to be important in regulating ATPase activity and the flow of protons through the CF(0) complex. This is ATP synthase gamma chain from Helicobacter pylori (strain J99 / ATCC 700824) (Campylobacter pylori J99).